We begin with the raw amino-acid sequence, 121 residues long: Large ribosomal subunit protein uL18c (121 aa).

It belongs to the universal ribosomal protein uL18 family. In terms of assembly, part of the 50S ribosomal subunit; contacts the 5S rRNA.

The protein resides in the plastid. It localises to the cyanelle. Functionally, binds 5S rRNA, forms part of the central protuberance of the 50S subunit. The sequence is that of Large ribosomal subunit protein uL18c (rpl18) from Cyanophora paradoxa.